The primary structure comprises 257 residues: Thioredoxin-dependent peroxide reductase, mitochondrial (257 aa).

A mitochondrion-targeting transit peptide spans 1 to 62 (MAAAAGRLLW…SAFSTSSSFH (62 aa)). The 159-residue stretch at 64-222 (PAVTQHAPYF…TLRLVKAFQF (159 aa)) folds into the Thioredoxin domain. The residue at position 84 (K84) is an N6-succinyllysine. K92 carries the N6-acetyllysine; alternate modification. An N6-succinyllysine; alternate modification is found at K92. Residue C109 is the Cysteine sulfenic acid (-SOH) intermediate of the active site. T147 is subject to Phosphothreonine.

It belongs to the peroxiredoxin family. AhpC/Prx1 subfamily. In terms of assembly, homodimer; disulfide-linked, upon oxidation. 6 homodimers assemble to form a ring-like dodecamer. Interacts with NEK6. Interacts with LRRK2. Interacts with MAP3K13. Interacts with RPS6KC1 (via PX domain). Phosphorylated by LRRK2; phosphorylation reduces perodixase activity. In terms of processing, the enzyme can be inactivated by further oxidation of the cysteine sulfenic acid (C(P)-SOH) to sulphinic acid (C(P)-SO2H) and sulphonic acid (C(P)-SO3H) instead of its condensation to a disulfide bond. Post-translationally, S-palmitoylated. As to expression, housekeeping-type gene preferentially expressed in murine erythroleukemia (MEL) cells.

It localises to the mitochondrion. Its subcellular location is the cytoplasm. It is found in the early endosome. The enzyme catalyses a hydroperoxide + [thioredoxin]-dithiol = an alcohol + [thioredoxin]-disulfide + H2O. Its function is as follows. Thiol-specific peroxidase that catalyzes the reduction of hydrogen peroxide and organic hydroperoxides to water and alcohols, respectively. Plays a role in cell protection against oxidative stress by detoxifying peroxides. Acts synergistically with MAP3K13 to regulate the activation of NF-kappa-B in the cytosol. Required for the maintenance of physical strength. The sequence is that of Thioredoxin-dependent peroxide reductase, mitochondrial (Prdx3) from Mus musculus (Mouse).